The following is a 297-amino-acid chain: Putative lipid kinase MamU (297 aa).

Residues 43-131 (EGKDMGRMVR…MDVGRVNDRY (89 aa)) form the DAGKc domain. 68–74 (GDGSLSR) lines the ATP pocket. The active-site Proton acceptor is the E274.

The protein belongs to the diacylglycerol/lipid kinase family.

The protein resides in the cytoplasm. Functionally, might phosphorylate lipids. The protein is Putative lipid kinase MamU of Magnetospirillum gryphiswaldense (strain DSM 6361 / JCM 21280 / NBRC 15271 / MSR-1).